Here is an 833-residue protein sequence, read N- to C-terminus: Coiled-coil domain-containing protein 110 (833 aa).

A coiled-coil region spans residues 431–778 (LQNYLKESVQ…REYLNLSDKI (348 aa)).

It is found in the nucleus. The chain is Coiled-coil domain-containing protein 110 (CCDC110) from Macaca fascicularis (Crab-eating macaque).